A 130-amino-acid polypeptide reads, in one-letter code: Small ribosomal subunit protein uS11 (130 aa).

Residues 111 to 130 (IRDVTPVPHNGSRPPKRRRA) form a disordered region.

It belongs to the universal ribosomal protein uS11 family. Part of the 30S ribosomal subunit. Interacts with proteins S7 and S18. Binds to IF-3.

Located on the platform of the 30S subunit, it bridges several disparate RNA helices of the 16S rRNA. Forms part of the Shine-Dalgarno cleft in the 70S ribosome. This chain is Small ribosomal subunit protein uS11, found in Lactobacillus acidophilus (strain ATCC 700396 / NCK56 / N2 / NCFM).